Here is a 376-residue protein sequence, read N- to C-terminus: Queuine tRNA-ribosyltransferase (376 aa).

Residue aspartate 93 is the Proton acceptor of the active site. Substrate is bound by residues 93 to 97 (DSGGF), aspartate 147, glutamine 190, and glycine 217. Residues 248 to 254 (GVGTPDD) are RNA binding. Aspartate 267 acts as the Nucleophile in catalysis. An RNA binding; important for wobble base 34 recognition region spans residues 272–276 (TRSGR).

Belongs to the queuine tRNA-ribosyltransferase family. Homodimer. Within each dimer, one monomer is responsible for RNA recognition and catalysis, while the other monomer binds to the replacement base PreQ1.

The enzyme catalyses 7-aminomethyl-7-carbaguanine + guanosine(34) in tRNA = 7-aminomethyl-7-carbaguanosine(34) in tRNA + guanine. The protein operates within tRNA modification; tRNA-queuosine biosynthesis. Functionally, catalyzes the base-exchange of a guanine (G) residue with the queuine precursor 7-aminomethyl-7-deazaguanine (PreQ1) at position 34 (anticodon wobble position) in tRNAs with GU(N) anticodons (tRNA-Asp, -Asn, -His and -Tyr). Catalysis occurs through a double-displacement mechanism. The nucleophile active site attacks the C1' of nucleotide 34 to detach the guanine base from the RNA, forming a covalent enzyme-RNA intermediate. The proton acceptor active site deprotonates the incoming PreQ1, allowing a nucleophilic attack on the C1' of the ribose to form the product. After dissociation, two additional enzymatic reactions on the tRNA convert PreQ1 to queuine (Q), resulting in the hypermodified nucleoside queuosine (7-(((4,5-cis-dihydroxy-2-cyclopenten-1-yl)amino)methyl)-7-deazaguanosine). The sequence is that of Queuine tRNA-ribosyltransferase from Agrobacterium fabrum (strain C58 / ATCC 33970) (Agrobacterium tumefaciens (strain C58)).